The following is a 280-amino-acid chain: Putative transcription factor kapC (280 aa).

Residues 1 to 102 (MQPALAPHPS…GKRPLSTSKR (102 aa)) are disordered. Residues 39-49 (PQPPAPQPPHM) show a composition bias toward pro residues. A compositionally biased stretch (polar residues) spans 79-89 (TQPDVTGQETP). In terms of domain architecture, bZIP spans 96–159 (PLSTSKRAAQ…EYIINLQSRL (64 aa)). Positions 97–120 (LSTSKRAAQNRAAQRAFRQRKEAH) are basic motif. The interval 124-155 (LEGKVKAYENMGEAIKALQAENYQLREYIINL) is leucine-zipper. A disordered region spans residues 169–280 (LPGNIDLSQP…EQTHGLPLIS (112 aa)). The span at 197–211 (APPPTAPQQPQPPHA) shows a compositional bias: pro residues.

It belongs to the bZIP family.

The protein localises to the nucleus. Functionally, putative transcription factor. This is Putative transcription factor kapC (kapC) from Neosartorya fischeri (strain ATCC 1020 / DSM 3700 / CBS 544.65 / FGSC A1164 / JCM 1740 / NRRL 181 / WB 181) (Aspergillus fischerianus).